The sequence spans 301 residues: Glycine--tRNA ligase alpha subunit (301 aa).

Belongs to the class-II aminoacyl-tRNA synthetase family. As to quaternary structure, tetramer of two alpha and two beta subunits.

It localises to the cytoplasm. The enzyme catalyses tRNA(Gly) + glycine + ATP = glycyl-tRNA(Gly) + AMP + diphosphate. This is Glycine--tRNA ligase alpha subunit from Nitrosospira multiformis (strain ATCC 25196 / NCIMB 11849 / C 71).